A 502-amino-acid polypeptide reads, in one-letter code: ATP synthase subunit alpha (502 aa).

A disordered region spans residues 115–138; that stretch reads VDGLGPIETTETRPIESPAPGVMD. 169–176 is a binding site for ATP; that stretch reads GDRQTGKT.

Belongs to the ATPase alpha/beta chains family. F-type ATPases have 2 components, CF(1) - the catalytic core - and CF(0) - the membrane proton channel. CF(1) has five subunits: alpha(3), beta(3), gamma(1), delta(1), epsilon(1). CF(0) has three main subunits: a(1), b(2) and c(9-12). The alpha and beta chains form an alternating ring which encloses part of the gamma chain. CF(1) is attached to CF(0) by a central stalk formed by the gamma and epsilon chains, while a peripheral stalk is formed by the delta and b chains.

The protein resides in the cell membrane. It carries out the reaction ATP + H2O + 4 H(+)(in) = ADP + phosphate + 5 H(+)(out). Its function is as follows. Produces ATP from ADP in the presence of a proton gradient across the membrane. The alpha chain is a regulatory subunit. This chain is ATP synthase subunit alpha, found in Geobacillus sp. (strain WCH70).